The following is a 396-amino-acid chain: MEFSQFKVNALMEITARPDLVFVRGQGSWLEDHAGKRYLDFVQGWAVNTLGHCAPEMKRALAEQADKLMNPSPAFYNLPSIELAQRLTSASCFDRVFFANSGAEANEGAIKLARKWGRVNRNGAYKIITMNHGFHGRTLATMSASGKPGWDTMFAPQVEGFPKAEINDLDSVRALIDAQTVAVMLEPVQGEAGVIPATREFMQGLRKLADEHGILFIVDEVQTGMGRTGSLFAYQQFDVIPDIMTLAKGIGGGIPLAALLAREEVCVFAHGDQGGTYNGNPLCAAVGVAVFDTITAPGFMEAAQARTRQLSEGLLALSAKRGLRGERGMGLLRALVLDRDDAPAIVEAARMLAPEGLLLNAPRGNLLRFMPALNVTEADMARMLEQLDGVIAAVRK.

Pyridoxal 5'-phosphate is bound by residues G102–A103 and F134. R137 is a binding site for N(2)-acetyl-L-ornithine. D219 to Q222 contacts pyridoxal 5'-phosphate. Position 248 is an N6-(pyridoxal phosphate)lysine (K248). T276 is a binding site for pyridoxal 5'-phosphate.

The protein belongs to the class-III pyridoxal-phosphate-dependent aminotransferase family. ArgD subfamily. In terms of assembly, homodimer. Pyridoxal 5'-phosphate is required as a cofactor.

The protein localises to the cytoplasm. The catalysed reaction is N(2)-acetyl-L-ornithine + 2-oxoglutarate = N-acetyl-L-glutamate 5-semialdehyde + L-glutamate. The protein operates within amino-acid biosynthesis; L-arginine biosynthesis; N(2)-acetyl-L-ornithine from L-glutamate: step 4/4. The chain is Acetylornithine aminotransferase 2 from Bordetella bronchiseptica (strain ATCC BAA-588 / NCTC 13252 / RB50) (Alcaligenes bronchisepticus).